The sequence spans 260 residues: MAKEWGYADHNGPDHWHELFPNAKGENQSPIELNTKEISHDPSLKPWTASYDPGSAKTILNNGKTCRVVFDDTYDRSMLRGGPLAAPYRLRQFHLHWGSSDDHGSEHSVDGVKYAAELHLVHWNSKYNSYATALKHADGIAVVGVFLKIGREKGEFQLLLDALDKIKTKGKEAPFNNFNPSCLFPACRDYWTYHGSFTTPPCEECIVWLLLKEPITVSSDQIAKLRTLYSSAENEPPVPLVRNWRPPQPIKGRIVKASFK.

At Ala2 the chain carries N-acetylalanine. The Alpha-carbonic anhydrase domain maps to 3 to 259 (KEWGYADHNG…IKGRIVKASF (257 aa)). 4 positions are modified to phosphoserine: Ser29, Ser43, Ser50, and Ser55. Residues 64–67 (KTCR) form an involved in proton transfer region. Thr73 is subject to Phosphothreonine. 3 residues coordinate Zn(2+): His94, His96, and His119. A Phosphotyrosine modification is found at Tyr127. Residues Cys182 and Cys187 each carry the S-glutathionyl cysteine modification. 198–199 (TT) contributes to the substrate binding site. At Thr216 the chain carries Phosphothreonine. Position 219 is a phosphoserine (Ser219).

This sequence belongs to the alpha-carbonic anhydrase family. Requires Zn(2+) as cofactor. Post-translationally, S-thiolated both by thiol-disulfide exchange with glutathione disulfide and by oxyradical-initiated S-thiolation with reduced glutathione. In terms of processing, S-glutathionylated in hepatocytes under oxidative stress.

Its subcellular location is the cytoplasm. The enzyme catalyses hydrogencarbonate + H(+) = CO2 + H2O. Inhibited by acetazolamide. Functionally, reversible hydration of carbon dioxide. This Bos taurus (Bovine) protein is Carbonic anhydrase 3 (CA3).